The sequence spans 298 residues: ATP-dependent Clp protease proteolytic subunit 5, chloroplastic (298 aa).

The N-terminal 100 residues, 1–100 (MAHACVSTSA…SSPYFPAYAQ (100 aa)), are a transit peptide targeting the chloroplast. At Gly101 the chain carries N-acetylglycine. The Nucleophile role is filled by Ser193. Residue His218 is part of the active site.

This sequence belongs to the peptidase S14 family. As to quaternary structure, component of the chloroplastic Clp protease core complex which consist of at least 16 proteins: CLPP4 (3 copies), CLPP5 (3 copies), CLPR4 (2 copies), ClpP1 (1 copy), CLPP6 (1 copy), CLPR2 (1 copy), CLPT1 (1 copy), CLPT2 (1 copy) and 3 copies of CLPP3 and/or CLPR1 and/or CLPR3. The core complex is organized in two heptameric rings, one containing CLPP3,4,5,6 in a 1:2:3:1 ratio and the other CLPP1 and CLPR1,2,3,4 in a 3:1:1:1:1 ratio. Interacts with CHIP. Post-translationally, ubiquitinated in vitro by CHIP. Mostly expressed in leaves. Also detected in stems, and to a lower extent, in roots (at protein level).

The protein localises to the plastid. It is found in the chloroplast stroma. The catalysed reaction is Hydrolysis of proteins to small peptides in the presence of ATP and magnesium. alpha-casein is the usual test substrate. In the absence of ATP, only oligopeptides shorter than five residues are hydrolyzed (such as succinyl-Leu-Tyr-|-NHMec, and Leu-Tyr-Leu-|-Tyr-Trp, in which cleavage of the -Tyr-|-Leu- and -Tyr-|-Trp bonds also occurs).. In terms of biological role, cleaves peptides in various proteins in a process that requires ATP hydrolysis. Has a chymotrypsin-like activity. Plays a major role in the degradation of misfolded proteins. This Arabidopsis thaliana (Mouse-ear cress) protein is ATP-dependent Clp protease proteolytic subunit 5, chloroplastic.